The primary structure comprises 171 residues: UPF0312 protein SAOUHSC_03022 (171 aa).

This sequence belongs to the UPF0312 family.

In Staphylococcus aureus (strain NCTC 8325 / PS 47), this protein is UPF0312 protein SAOUHSC_03022.